Here is a 316-residue protein sequence, read N- to C-terminus: Pantothenate kinase (316 aa).

Residue 95–102 (GSVAVGKS) participates in ATP binding.

This sequence belongs to the prokaryotic pantothenate kinase family.

The protein resides in the cytoplasm. The enzyme catalyses (R)-pantothenate + ATP = (R)-4'-phosphopantothenate + ADP + H(+). It functions in the pathway cofactor biosynthesis; coenzyme A biosynthesis; CoA from (R)-pantothenate: step 1/5. The polypeptide is Pantothenate kinase (Cronobacter sakazakii (strain ATCC BAA-894) (Enterobacter sakazakii)).